Consider the following 185-residue polypeptide: Large ribosomal subunit protein uL5 (185 aa).

Belongs to the universal ribosomal protein uL5 family. Part of the 50S ribosomal subunit; part of the 5S rRNA/L5/L18/L25 subcomplex. Contacts the 5S rRNA and the P site tRNA. Forms a bridge to the 30S subunit in the 70S ribosome.

In terms of biological role, this is one of the proteins that bind and probably mediate the attachment of the 5S RNA into the large ribosomal subunit, where it forms part of the central protuberance. In the 70S ribosome it contacts protein S13 of the 30S subunit (bridge B1b), connecting the 2 subunits; this bridge is implicated in subunit movement. Contacts the P site tRNA; the 5S rRNA and some of its associated proteins might help stabilize positioning of ribosome-bound tRNAs. The sequence is that of Large ribosomal subunit protein uL5 from Streptomyces coelicolor (strain ATCC BAA-471 / A3(2) / M145).